Reading from the N-terminus, the 433-residue chain is Forkhead box protein A2-B (433 aa).

A DNA-binding region (fork-head) is located at residues 147–241; that stretch reads KPPYSYISLI…ENGCYLRRQK (95 aa). Positions 247–260 are enriched in basic and acidic residues; the sequence is KKPSLREGGGKKLS. Disordered regions lie at residues 247 to 337 and 407 to 433; these read KKPS…QSHL and SGLE…MNSS. Positions 261-282 are enriched in low complexity; the sequence is EGASSVGSVGNSSSERSVGNES. A compositionally biased stretch (basic and acidic residues) spans 292–302; sequence EQKRSLVDMKS. Residues 315–331 show a composition bias toward low complexity; sequence ASQAQHLLSQHHSVLSH. Residues 407–421 show a composition bias toward polar residues; it reads SGLEPSPISSDTSYY.

Its subcellular location is the nucleus. Acts as a transcriptional activator during early development, limiting the extent of mesoderm formation in the gastrula. Binds to DNA via the target sequence 5'-GT[AC]AACA-3', with 5'-GTAAACA-3' being the preferred binding site. The polypeptide is Forkhead box protein A2-B (foxa2-b) (Xenopus laevis (African clawed frog)).